Here is a 435-residue protein sequence, read N- to C-terminus: Proline--tRNA ligase (435 aa).

The protein belongs to the class-II aminoacyl-tRNA synthetase family. ProS type 2 subfamily. In terms of assembly, homodimer.

Its subcellular location is the cytoplasm. It catalyses the reaction tRNA(Pro) + L-proline + ATP = L-prolyl-tRNA(Pro) + AMP + diphosphate. In terms of biological role, catalyzes the attachment of proline to tRNA(Pro) in a two-step reaction: proline is first activated by ATP to form Pro-AMP and then transferred to the acceptor end of tRNA(Pro). This is Proline--tRNA ligase from Rhodospirillum rubrum (strain ATCC 11170 / ATH 1.1.1 / DSM 467 / LMG 4362 / NCIMB 8255 / S1).